A 352-amino-acid chain; its full sequence is D-alanine--D-alanine ligase (352 aa).

One can recognise an ATP-grasp domain in the interval 133–342; sequence KTVFAAAGLP…FPKLVDRLIQ (210 aa). 169 to 224 provides a ligand contact to ATP; it reads DETIGYPNFVKPANLGSSVGISKVRSRLELEAALDSAASFDRRIVVEAGVVAREVE. D295, E309, and N311 together coordinate Mg(2+).

This sequence belongs to the D-alanine--D-alanine ligase family. The cofactor is Mg(2+). Mn(2+) serves as cofactor.

The protein resides in the cytoplasm. It carries out the reaction 2 D-alanine + ATP = D-alanyl-D-alanine + ADP + phosphate + H(+). It functions in the pathway cell wall biogenesis; peptidoglycan biosynthesis. Functionally, cell wall formation. This chain is D-alanine--D-alanine ligase, found in Acaryochloris marina (strain MBIC 11017).